Reading from the N-terminus, the 320-residue chain is Acyl-coenzyme A thioesterase 8 (320 aa).

Catalysis depends on charge relay system residues Asp-233, Ser-255, and Gln-305. The Microbody targeting signal motif lies at 318–320; sequence SKL.

This sequence belongs to the C/M/P thioester hydrolase family. As to quaternary structure, homodimer. In terms of tissue distribution, ubiquitous.

The protein localises to the peroxisome matrix. It carries out the reaction choloyl-CoA + H2O = cholate + CoA + H(+). The enzyme catalyses chenodeoxycholoyl-CoA + H2O = chenodeoxycholate + CoA + H(+). It catalyses the reaction acetyl-CoA + H2O = acetate + CoA + H(+). The catalysed reaction is malonyl-CoA + H2O = malonate + CoA + H(+). It carries out the reaction acetoacetyl-CoA + H2O = acetoacetate + CoA + H(+). The enzyme catalyses propanoyl-CoA + H2O = propanoate + CoA + H(+). It catalyses the reaction butanoyl-CoA + H2O = butanoate + CoA + H(+). The catalysed reaction is succinyl-CoA + H2O = succinate + CoA + H(+). It carries out the reaction glutaryl-CoA + H2O = glutarate + CoA + H(+). The enzyme catalyses hexanoyl-CoA + H2O = hexanoate + CoA + H(+). It catalyses the reaction hexanedioyl-CoA + H2O = hexanedioate + CoA + H(+). The catalysed reaction is octanoyl-CoA + H2O = octanoate + CoA + H(+). It carries out the reaction octanedioyl-CoA + H2O = octanedioate + CoA + H(+). The enzyme catalyses decanoyl-CoA + H2O = decanoate + CoA + H(+). It catalyses the reaction decanedioyl-CoA + H2O = decanedioate + CoA + H(+). The catalysed reaction is dodecanoyl-CoA + H2O = dodecanoate + CoA + H(+). It carries out the reaction dodecanedioyl-CoA + H2O = dodecanedioate + CoA + H(+). The enzyme catalyses tetradecanoyl-CoA + H2O = tetradecanoate + CoA + H(+). It catalyses the reaction (9Z)-tetradecenoyl-CoA + H2O = (9Z)-tetradecenoate + CoA + H(+). The catalysed reaction is hexadecanoyl-CoA + H2O = hexadecanoate + CoA + H(+). It carries out the reaction (9Z)-hexadecenoyl-CoA + H2O = (9Z)-hexadecenoate + CoA + H(+). The enzyme catalyses octadecanoyl-CoA + H2O = octadecanoate + CoA + H(+). It catalyses the reaction (9Z)-octadecenoyl-CoA + H2O = (9Z)-octadecenoate + CoA + H(+). The catalysed reaction is (9Z,12Z)-octadecadienoyl-CoA + H2O = (9Z,12Z)-octadecadienoate + CoA + H(+). It carries out the reaction eicosanoyl-CoA + H2O = eicosanoate + CoA + H(+). The enzyme catalyses (5Z,8Z,11Z,14Z)-eicosatetraenoyl-CoA + H2O = (5Z,8Z,11Z,14Z)-eicosatetraenoate + CoA + H(+). It catalyses the reaction 4,8-dimethylnonanoyl-CoA + H2O = 4,8-dimethylnonanoate + CoA + H(+). The catalysed reaction is 2,6-dimethylheptanoyl-CoA + H2O = 2,6-dimethylheptanoate + CoA + H(+). It carries out the reaction (3S)-3-hydroxy-3-methylglutaryl-CoA + H2O = 3-hydroxy-3-methylglutarate + CoA + H(+). The enzyme catalyses 3alpha,7alpha,12alpha-trihydroxy-5beta-cholestan-26-oyl-CoA + H2O = 3alpha,7alpha,12alpha-trihydroxy-5beta-cholestan-26-oate + CoA + H(+). It catalyses the reaction 2-methyloctadecanoyl-CoA + H2O = 2-methyloctadecanoate + CoA + H(+). The catalysed reaction is prostaglandin F2alpha-CoA + H2O = prostaglandin F2alpha + CoA + H(+). It functions in the pathway lipid metabolism; fatty acid metabolism. Inhibited by CoASH (IC(50)=10-15 uM). Also inhibited by cysteine-reactive agents. Catalyzes the hydrolysis of acyl-CoAs into free fatty acids and coenzyme A (CoASH), regulating their respective intracellular levels. Displays no strong substrate specificity with respect to the carboxylic acid moiety of Acyl-CoAs. Hydrolyzes medium length (C2 to C20) straight-chain, saturated and unsaturated acyl-CoAS but is inactive towards substrates with longer aliphatic chains. Moreover, it catalyzes the hydrolysis of CoA esters of bile acids, such as choloyl-CoA and chenodeoxycholoyl-CoA and competes with bile acid CoA:amino acid N-acyltransferase (BAAT). Is also able to hydrolyze CoA esters of dicarboxylic acids. It is involved in the metabolic regulation of peroxisome proliferation. In Mus musculus (Mouse), this protein is Acyl-coenzyme A thioesterase 8 (Acot8).